Consider the following 137-residue polypeptide: 5-hydroxyisourate hydrolase (137 aa).

An N-terminal signal peptide occupies residues 1 to 23 (MLKRYLVLSVVTAAFSLPSLVYA). Positions 32, 70, and 134 each coordinate substrate.

Belongs to the transthyretin family. 5-hydroxyisourate hydrolase subfamily. In terms of assembly, homotetramer.

The protein resides in the periplasm. It catalyses the reaction 5-hydroxyisourate + H2O = 5-hydroxy-2-oxo-4-ureido-2,5-dihydro-1H-imidazole-5-carboxylate + H(+). Catalyzes the hydrolysis of 5-hydroxyisourate (HIU) to 2-oxo-4-hydroxy-4-carboxy-5-ureidoimidazoline (OHCU). The sequence is that of 5-hydroxyisourate hydrolase (hiuH) from Escherichia coli O157:H7.